The sequence spans 2325 residues: Centriolin (2325 aa).

Residues 1–33 form a disordered region; it reads MKKGSQQKIFSKAKIPSSSHSPIPSSMSNMRSR. Residues 16-33 are compositionally biased toward low complexity; it reads PSSSHSPIPSSMSNMRSR. LRR repeat units follow at residues 126-147, 148-169, 170-191, and 194-215; these read KLEVLNLSYNLIGKIEKLDKLL, KLRELNLSYNKISKIEGIENMC, NLQKLNLAGNEIEHIPVWLGKK, and SLRVLNLKGNKISSLQDISKLK. Residues 228 to 266 enclose the LRRCT domain; sequence NPVVTLPHYLQFTIFHLRSLESLEGQPVTTQDRQEAFER. 2 coiled-coil regions span residues 267 to 343 and 435 to 799; these read FSLE…IELT and LDTQ…LNHV. Ser-831 carries the post-translational modification Phosphoserine. Residues 851 to 1101 are a coiled coil; it reads LARSKWERDE…ARLQNVLDLT (251 aa). The segment at 1150 to 1241 is disordered; it reads PSSKVSSHSS…DQEEPPFVPP (92 aa). The segment covering 1224-1235 has biased composition (acidic residues); that stretch reads SQEESELDDQEE. Residues 1317–2255 are a coiled coil; sequence EHHNLENEVS…DRLKAQLRHC (939 aa). Phosphoserine is present on Ser-1475. The interval 1948 to 2118 is required for centrosome localization; sequence MMFQRLQKER…ELVAQDNHER (171 aa). The sufficient for interaction with HOOK2 stretch occupies residues 1985–2325; that stretch reads QKSKLDQVLS…QNQEKNASAR (341 aa). A disordered region spans residues 2288–2325; sequence VTSTSADSASSPSLSQLESSLTEDSQLGQNQEKNASAR. Over residues 2290-2314 the composition is skewed to low complexity; that stretch reads STSADSASSPSLSQLESSLTEDSQL. Polar residues predominate over residues 2315-2325; sequence GQNQEKNASAR.

In terms of assembly, interacts with HOOK2. Interacts with EXOC6 and SNAPIN. Associates with the exocyst complex. In terms of tissue distribution, widely expressed with highest levels in testis and trachea.

It localises to the cytoplasm. The protein resides in the cytoskeleton. It is found in the microtubule organizing center. The protein localises to the centrosome. Its subcellular location is the midbody. It localises to the midbody ring. In terms of biological role, involved in cell cycle progression and cytokinesis. During the late steps of cytokinesis, anchors exocyst and SNARE complexes at the midbody, thereby allowing secretory vesicle-mediated abscission. This Homo sapiens (Human) protein is Centriolin (CNTRL).